The sequence spans 576 residues: uncharacterized protein (576 aa).

Polar residues-rich tracts occupy residues 1–21 (MSTN…QSAS) and 28–40 (HTTS…TYQL). Positions 1 to 40 (MSTNPNAGIQPLTNSISQSASAHPELYHTTSHESVSTYQL) are disordered. Helical transmembrane passes span 149 to 169 (FASS…HISL), 173 to 193 (LLTM…WAPL), 200 to 220 (KLPL…VAVA), 231 to 251 (FFSG…FADM), 261 to 281 (ITIF…IGGF), 291 to 311 (WTEY…YLFC), 366 to 386 (PIVF…YLLL), 401 to 421 (MGVA…GSAI), 446 to 466 (LPPM…LSWS), 472 to 492 (VHWI…LLIF), 503 to 525 (YLFR…AAGF), and 542 to 562 (GSLL…FFFF).

It belongs to the major facilitator superfamily. CAR1 family.

It is found in the endoplasmic reticulum. It localises to the golgi apparatus. The protein localises to the membrane. This is an uncharacterized protein from Schizosaccharomyces pombe (strain 972 / ATCC 24843) (Fission yeast).